The primary structure comprises 248 residues: Triosephosphate isomerase (248 aa).

9–11 (NWK) serves as a coordination point for substrate. Catalysis depends on histidine 94, which acts as the Electrophile. Glutamate 166 (proton acceptor) is an active-site residue. Substrate contacts are provided by residues glycine 172, serine 212, and 233 to 234 (GG).

The protein belongs to the triosephosphate isomerase family. Homodimer.

The protein localises to the cytoplasm. It carries out the reaction D-glyceraldehyde 3-phosphate = dihydroxyacetone phosphate. It functions in the pathway carbohydrate biosynthesis; gluconeogenesis. Its pathway is carbohydrate degradation; glycolysis; D-glyceraldehyde 3-phosphate from glycerone phosphate: step 1/1. Its function is as follows. Involved in the gluconeogenesis. Catalyzes stereospecifically the conversion of dihydroxyacetone phosphate (DHAP) to D-glyceraldehyde-3-phosphate (G3P). The polypeptide is Triosephosphate isomerase (Alkaliphilus oremlandii (strain OhILAs) (Clostridium oremlandii (strain OhILAs))).